Reading from the N-terminus, the 146-residue chain is Basic phospholipase A2 paradoxin-like alpha chain (146 aa).

The first 27 residues, 1–27, serve as a signal peptide directing secretion; sequence MHPAHLLVLLAVCVSLLGASDIPPLPL. 7 disulfide bridges follow: C38–C99, C54–C145, C56–C72, C71–C126, C78–C119, C88–C112, and C106–C117. The Ca(2+) site is built by Y55, G57, and G59. H75 is a catalytic residue. Residue D76 coordinates Ca(2+). Residue D120 is part of the active site.

It belongs to the phospholipase A2 family. Group I subfamily. D49 sub-subfamily. As to quaternary structure, heterotrimer of alpha, beta, and gamma chains; non-covalently linked. Ca(2+) is required as a cofactor. Expressed by the venom gland.

It localises to the secreted. It catalyses the reaction a 1,2-diacyl-sn-glycero-3-phosphocholine + H2O = a 1-acyl-sn-glycero-3-phosphocholine + a fatty acid + H(+). In terms of biological role, heterotrimer: Snake venom phospholipase A2 (PLA2) heterotrimer that acts as a potent presynaptic neurotoxin by blocking synaptic transmission and synaptic vesicle recycling. May act by binding in a calcium-dependent fashion to neurotonal pentraxin-1 (NPTX1) and neurotonal pentraxin-2 (NPTX2), but not to neuronal pentraxin receptor (NPTXR). Also binds to taipoxin-associated calcium binding protein 49 (RCN2), a protein localized in the lumen of endoplasmic reticulum. Functionally, monomer (alpha chain): Snake venom phospholipase A2 (PLA2) alpha chain that possesses the same high enzymatic activity than the heterotrimer. PLA2 catalyzes the calcium-dependent hydrolysis of the 2-acyl groups in 3-sn-phosphoglycerides. This is Basic phospholipase A2 paradoxin-like alpha chain from Oxyuranus microlepidotus (Inland taipan).